The primary structure comprises 377 residues: Virion membrane protein OPG143 (377 aa).

Gly2 carries the N-myristoyl glycine; by host lipid modification. Topologically, residues 2-342 (GAAVTLNRIK…VKDKIKLPTW (341 aa)) are virion surface. The helical; Signal-anchor for type II membrane protein transmembrane segment at 343–363 (LGAAITLVVISVIFYFISIYS) threads the bilayer. Residues 364 to 377 (RPKIKTNDINVRRR) are Intravirion-facing.

This sequence belongs to the orthopoxvirus OPG143 family. Part of a stable entry-fusion complex (EFC) which is at least composed of proteins OPG143, OPG147, OPG155, OPG086, OPG094, OPG107, OPG104, and OPG099. Formation of the viral membrane is necessary for the assembly of the complex. Interacts with OPG094. Interacts with OPG153. In terms of processing, most cysteines are linked by disulfide bonds. They are created by the viral disulfide bond formation pathway, a poxvirus-specific redox pathway that operates on the cytoplasmic side of the MV membranes.

The protein resides in the virion membrane. Envelope protein part of the entry-fusion complex responsible for the virus membrane fusion with host cell membrane during virus entry. Also plays a role in cell-cell fusion (syncytium formation). The sequence is that of Virion membrane protein OPG143 (OPG143) from Vaccinia virus (strain Western Reserve) (VACV).